The chain runs to 506 residues: Cobyric acid synthase (506 aa).

In terms of domain architecture, GATase cobBQ-type spans Asp-251 to Phe-448. Cys-332 functions as the Nucleophile in the catalytic mechanism. His-440 is a catalytic residue.

It belongs to the CobB/CobQ family. CobQ subfamily. In terms of assembly, homodimer.

It participates in cofactor biosynthesis; adenosylcobalamin biosynthesis. Its function is as follows. Catalyzes amidations at positions B, D, E, and G on adenosylcobyrinic A,C-diamide. NH(2) groups are provided by glutamine, and one molecule of ATP is hydrogenolyzed for each amidation. This chain is Cobyric acid synthase (cbiP), found in Salmonella typhimurium (strain LT2 / SGSC1412 / ATCC 700720).